A 265-amino-acid chain; its full sequence is Silaffin-1 (265 aa).

The N-terminal stretch at 1 to 19 (MKLTAIFPLLFTAVGYCAA) is a signal peptide. Positions 20–107 (QSIADLAAAN…DSEEEELRIL (88 aa)) are cleaved as a propeptide — acidic. Residues 37 to 106 (SAQLISADSS…EDSEEEELRI (70 aa)) are disordered. Residues 51 to 90 (DSSVESVDAASSDVSGSSVESVDVSGSSLESVDVSGSSLE) show a composition bias toward low complexity. The segment covering 91-103 (SVDDSSEDSEEEE) has biased composition (acidic residues). One copy of the R1; atypical repeat lies at 108 to 140 (SSKKSGSYYSYGTKKSGSYSGYSTKKSASRRIL). Residues 108–257 (SSKKSGSYYS…GSKGSKRRIL (150 aa)) form a 7 X 19 AA repeat of S-S-K-K-S-G-S-Y-S-G-S-K-G-S-K-R-R-[IL]-L region. Lysine 110 carries the post-translational modification N6-poly(methylaminopropyl)lysine. Lysine 111 bears the N6,N6-dimethyllysine mark. Positions 122–133 (KSGSYSGYSTKK) are enriched in low complexity. A disordered region spans residues 122–265 (KSGSYSGYST…ILSGGLRGSM (144 aa)). Positions 137 to 140 (RRIL) are excised as a propeptide. An R2; atypical repeat occupies 141–162 (SSKKSGSYSGYSTKKSGSRRIL). Low complexity predominate over residues 142-155 (SKKSGSYSGYSTKK). Position 143 is an N6-poly(methylaminopropyl)lysine (lysine 143). Residue lysine 144 is modified to N6,N6-dimethyllysine. Lysine 154 is subject to N6-poly(methylaminopropyl)lysine. Lysine 155 is subject to N6,N6-dimethyllysine. Positions 159 to 162 (RRIL) are excised as a propeptide. Residues serine 163 and serine 164 each carry the phosphoserine modification. The stretch at 163–181 (SSKKSGSYSGSKGSKRRIL) is one R3 repeat. A compositionally biased stretch (low complexity) spans 164 to 174 (SKKSGSYSGSK). Lysine 165 is subject to N6-poly(methylaminopropyl)lysine. The residue at position 166 (lysine 166) is an N6,N6-dimethyllysine. Phosphoserine is present on residues serine 167, serine 169, serine 171, and serine 173. Lysine 174 carries the post-translational modification N6,N6,N6-trimethyl-5-hydroxylysine. Serine 176 is modified (phosphoserine). The residue at position 177 (lysine 177) is an N6-poly(methylaminopropyl)lysine. Positions 178 to 181 (RRIL) are excised as a propeptide. Residues serine 182 and serine 183 each carry the phosphoserine modification. The R4 repeat unit spans residues 182–200 (SSKKSGSYSGSKGSKRRNL). The span at 183-193 (SKKSGSYSGSK) shows a compositional bias: low complexity. N6-poly(methylaminopropyl)lysine is present on lysine 184. Lysine 185 bears the N6,N6-dimethyllysine mark. Residues serine 186, serine 188, serine 190, and serine 192 each carry the phosphoserine modification. Lysine 193 carries the N6,N6,N6-trimethyl-5-hydroxylysine modification. A Phosphoserine modification is found at serine 195. Lysine 196 bears the N6-poly(methylaminopropyl)lysine mark. The propeptide occupies 197–200 (RRNL). Residues serine 201 and serine 202 each carry the phosphoserine modification. The stretch at 201–219 (SSKKSGSYSGSKGSKRRIL) is one R5 repeat. Positions 202-212 (SKKSGSYSGSK) are enriched in low complexity. N6-poly(methylaminopropyl)lysine is present on lysine 203. N6,N6-dimethyllysine is present on lysine 204. Residues serine 205, serine 207, serine 209, and serine 211 each carry the phosphoserine modification. Lysine 212 carries the N6,N6,N6-trimethyl-5-hydroxylysine modification. Serine 214 carries the phosphoserine modification. Lysine 215 bears the N6-poly(methylaminopropyl)lysine mark. A propeptide spanning residues 216-219 (RRIL) is cleaved from the precursor. Phosphoserine is present on residues serine 220 and serine 221. The R6 repeat unit spans residues 220 to 238 (SSKKSGSYSGSKGSKRRNL). A compositionally biased stretch (low complexity) spans 221 to 231 (SKKSGSYSGSK). Lysine 222 is subject to N6-poly(methylaminopropyl)lysine. Residue lysine 223 is modified to N6,N6-dimethyllysine. Residues serine 224, serine 226, serine 228, and serine 230 each carry the phosphoserine modification. Lysine 231 carries the post-translational modification N6,N6,N6-trimethyl-5-hydroxylysine. Phosphoserine is present on serine 233. Position 234 is an N6-poly(methylaminopropyl)lysine (lysine 234). Residues 235 to 238 (RRNL) constitute a propeptide that is removed on maturation. Serine 239 and serine 240 each carry phosphoserine. One copy of the R7 repeat lies at 239 to 257 (SSKKSGSYSGSKGSKRRIL). Residues 240-250 (SKKSGSYSGSK) are compositionally biased toward low complexity. Lysine 241 bears the N6-poly(methylaminopropyl)lysine mark. An N6,N6-dimethyllysine modification is found at lysine 242. Residues serine 243, serine 245, serine 247, and serine 249 each carry the phosphoserine modification. Lysine 250 carries the post-translational modification N6,N6,N6-trimethyl-5-hydroxylysine. Residue serine 252 is modified to Phosphoserine. Position 253 is an N6-poly(methylaminopropyl)lysine (lysine 253). Positions 254 to 265 (RRILSGGLRGSM) are excised as a propeptide.

As to quaternary structure, silaffin-1A peptides form large aggregates via electrostatic interactions due to intermolecular interactions between the negatively charged phosphate groups and the polyamine moieties. Post-translationally, N6-polymethylaminopropylated. Two lysine residues of each peptide bears 6 to 11 repeats of methyl-propylamine, which gives a possible template for nucleation, and may also control the silica colloid size within the silica deposition vesicle (SDV). Phosphorylated. All serine residues of the Silaffin-1A1 peptide are phosphorylated. Only minor amounts of the Silaffin-1A2 peptide are phosphorylated. Phosphorylation is essential for the activity. It may represent a source of anions required for silica formation of diatoms.

Catalyzes the polymerization of silica spheres from a silicilic acid solution. It therefore plays a central role in the formation of silica cell wall of diatoms. In Cylindrotheca fusiformis (Marine diatom), this protein is Silaffin-1 (SIL1).